The primary structure comprises 473 residues: Aspartyl/glutamyl-tRNA(Asn/Gln) amidotransferase subunit B (473 aa).

The protein belongs to the GatB/GatE family. GatB subfamily. As to quaternary structure, heterotrimer of A, B and C subunits.

The enzyme catalyses L-glutamyl-tRNA(Gln) + L-glutamine + ATP + H2O = L-glutaminyl-tRNA(Gln) + L-glutamate + ADP + phosphate + H(+). It carries out the reaction L-aspartyl-tRNA(Asn) + L-glutamine + ATP + H2O = L-asparaginyl-tRNA(Asn) + L-glutamate + ADP + phosphate + 2 H(+). Allows the formation of correctly charged Asn-tRNA(Asn) or Gln-tRNA(Gln) through the transamidation of misacylated Asp-tRNA(Asn) or Glu-tRNA(Gln) in organisms which lack either or both of asparaginyl-tRNA or glutaminyl-tRNA synthetases. The reaction takes place in the presence of glutamine and ATP through an activated phospho-Asp-tRNA(Asn) or phospho-Glu-tRNA(Gln). The chain is Aspartyl/glutamyl-tRNA(Asn/Gln) amidotransferase subunit B from Campylobacter hominis (strain ATCC BAA-381 / DSM 21671 / CCUG 45161 / LMG 19568 / NCTC 13146 / CH001A).